The following is a 95-amino-acid chain: Integration host factor subunit beta (95 aa).

The protein belongs to the bacterial histone-like protein family. As to quaternary structure, heterodimer of an alpha and a beta chain.

In terms of biological role, this protein is one of the two subunits of integration host factor, a specific DNA-binding protein that functions in genetic recombination as well as in transcriptional and translational control. The sequence is that of Integration host factor subunit beta from Klebsiella pneumoniae (strain 342).